We begin with the raw amino-acid sequence, 446 residues long: Keratin, type I cytoskeletal 25 (446 aa).

A disordered region spans residues 1–20 (MSLRLSSGSKRSYARPSTGS). Positions 1–74 (MSLRLSSGSK…VNEGGLLSGN (74 aa)) are head. Positions 75–110 (EKVTMQNLNDRLASYLDNVQALQEANADLEQKIKGW) are coil 1A. Positions 75–390 (EKVTMQNLND…LLIGGDEGAC (316 aa)) constitute an IF rod domain. A linker 1 region spans residues 111–132 (YEKFGPGSCRGLDHDYSRYFPI). The interval 133–224 (IDDLKNQIIT…KNHKEEMQAL (92 aa)) is coil 1B. Residues 225 to 247 (QCAAGGNVNVEMNAAPGVDLTVL) form a linker 12 region. The segment at 248–386 (LNNMRAEYEA…ETYCLLIGGD (139 aa)) is coil 2. A tail region spans residues 387-446 (EGACKSSSYKSKDYTSGNAGNQSKDSPKAIVVKKVLEEVDQRSKILTTRLHSLEEKSQSN). A disordered region spans residues 394–413 (SYKSKDYTSGNAGNQSKDSP). Polar residues predominate over residues 400 to 410 (YTSGNAGNQSK). Ser-438 carries the phosphoserine modification.

Belongs to the intermediate filament family. Heterodimer of a type I and a type II keratin. Heterodimer with type II keratin KRT5 leading to the formation of keratin intermediate filament (KIF) network. Interacts with KRT6A to form filaments.

It is found in the cytoplasm. Essential for the proper assembly of type I and type II keratin protein complexes and formation of keratin intermediate filaments in the inner root sheath (irs). Plays a role in the cytoskeleton organization. This chain is Keratin, type I cytoskeletal 25, found in Rattus norvegicus (Rat).